Reading from the N-terminus, the 341-residue chain is tRNA N6-adenosine threonylcarbamoyltransferase (341 aa).

Positions 111 and 115 each coordinate Fe cation. Residues 134 to 138 (LVSGG), aspartate 167, glycine 180, and asparagine 276 each bind substrate. Aspartate 304 contacts Fe cation.

Belongs to the KAE1 / TsaD family. The cofactor is Fe(2+).

It is found in the cytoplasm. The catalysed reaction is L-threonylcarbamoyladenylate + adenosine(37) in tRNA = N(6)-L-threonylcarbamoyladenosine(37) in tRNA + AMP + H(+). Required for the formation of a threonylcarbamoyl group on adenosine at position 37 (t(6)A37) in tRNAs that read codons beginning with adenine. Is involved in the transfer of the threonylcarbamoyl moiety of threonylcarbamoyl-AMP (TC-AMP) to the N6 group of A37, together with TsaE and TsaB. TsaD likely plays a direct catalytic role in this reaction. The chain is tRNA N6-adenosine threonylcarbamoyltransferase from Pseudomonas paraeruginosa (strain DSM 24068 / PA7) (Pseudomonas aeruginosa (strain PA7)).